The following is a 227-amino-acid chain: Testis-expressed protein 30 (227 aa).

The chain is Testis-expressed protein 30 (TEX30) from Homo sapiens (Human).